A 476-amino-acid polypeptide reads, in one-letter code: Aspartyl/glutamyl-tRNA(Asn/Gln) amidotransferase subunit B (476 aa).

Belongs to the GatB/GatE family. GatB subfamily. As to quaternary structure, heterotrimer of A, B and C subunits.

It carries out the reaction L-glutamyl-tRNA(Gln) + L-glutamine + ATP + H2O = L-glutaminyl-tRNA(Gln) + L-glutamate + ADP + phosphate + H(+). It catalyses the reaction L-aspartyl-tRNA(Asn) + L-glutamine + ATP + H2O = L-asparaginyl-tRNA(Asn) + L-glutamate + ADP + phosphate + 2 H(+). In terms of biological role, allows the formation of correctly charged Asn-tRNA(Asn) or Gln-tRNA(Gln) through the transamidation of misacylated Asp-tRNA(Asn) or Glu-tRNA(Gln) in organisms which lack either or both of asparaginyl-tRNA or glutaminyl-tRNA synthetases. The reaction takes place in the presence of glutamine and ATP through an activated phospho-Asp-tRNA(Asn) or phospho-Glu-tRNA(Gln). In Variovorax paradoxus (strain S110), this protein is Aspartyl/glutamyl-tRNA(Asn/Gln) amidotransferase subunit B.